The primary structure comprises 311 residues: Transcriptional regulatory protein MoaR1 (311 aa).

Residues 15-117 constitute a DNA-binding region (ompR/PhoB-type); that stretch reads LNATTAGAVQ…SEPPGYRLLI (103 aa).

Belongs to the AfsR/DnrI/RedD regulatory family.

Its function is as follows. Acts as a positive transcriptional regulator of the molybdopterin biosynthesis moa1 locus, promoting the expression of the moaA1B1C1D1 genes. The protein is Transcriptional regulatory protein MoaR1 (moaR1) of Mycobacterium bovis (strain BCG / Pasteur 1173P2).